The chain runs to 178 residues: NADH-quinone oxidoreductase subunit B 1 (178 aa).

[4Fe-4S] cluster-binding residues include cysteine 39, cysteine 40, cysteine 104, and cysteine 135.

The protein belongs to the complex I 20 kDa subunit family. In terms of assembly, NDH-1 is composed of 14 different subunits. Subunits NuoB, C, D, E, F, and G constitute the peripheral sector of the complex. [4Fe-4S] cluster serves as cofactor.

The protein resides in the cell inner membrane. The catalysed reaction is a quinone + NADH + 5 H(+)(in) = a quinol + NAD(+) + 4 H(+)(out). Its function is as follows. NDH-1 shuttles electrons from NADH, via FMN and iron-sulfur (Fe-S) centers, to quinones in the respiratory chain. The immediate electron acceptor for the enzyme in this species is believed to be a menaquinone. Couples the redox reaction to proton translocation (for every two electrons transferred, four hydrogen ions are translocated across the cytoplasmic membrane), and thus conserves the redox energy in a proton gradient. This chain is NADH-quinone oxidoreductase subunit B 1, found in Cytophaga hutchinsonii (strain ATCC 33406 / DSM 1761 / CIP 103989 / NBRC 15051 / NCIMB 9469 / D465).